We begin with the raw amino-acid sequence, 1059 residues long: Carbamoyl phosphate synthase large chain (1059 aa).

The tract at residues 1 to 401 (MPKRKDIQKI…SLLKACRSLE (401 aa)) is carboxyphosphate synthetic domain. The ATP site is built by R129, R169, G175, G176, R208, I210, E215, G241, I242, H243, Q284, and E298. The region spanning 133 to 327 (KQLMEELGQP…IAKLAAKIAV (195 aa)) is the ATP-grasp 1 domain. The Mg(2+) site is built by Q284, E298, and N300. 3 residues coordinate Mn(2+): Q284, E298, and N300. The segment at 402-546 (VGVDHNELPA…YSTYGFENES (145 aa)) is oligomerization domain. The tract at residues 547–929 (VKSSKESVLV…ALYKAFEASY (383 aa)) is carbamoyl phosphate synthetic domain. Positions 671-861 (EQALKELDIP…MAQVATRLIL (191 aa)) constitute an ATP-grasp 2 domain. ATP contacts are provided by R707, S746, I748, E752, G777, V778, H779, S780, Q820, and E832. Mg(2+) is bound by residues Q820, E832, and N834. Residues Q820, E832, and N834 each contribute to the Mn(2+) site. An MGS-like domain is found at 930 to 1059 (LHLPNFGNVV…ESRSFTTEAI (130 aa)). The interval 930–1059 (LHLPNFGNVV…ESRSFTTEAI (130 aa)) is allosteric domain.

This sequence belongs to the CarB family. Composed of two chains; the small (or glutamine) chain promotes the hydrolysis of glutamine to ammonia, which is used by the large (or ammonia) chain to synthesize carbamoyl phosphate. Tetramer of heterodimers (alpha,beta)4. The cofactor is Mg(2+). It depends on Mn(2+) as a cofactor.

It carries out the reaction hydrogencarbonate + L-glutamine + 2 ATP + H2O = carbamoyl phosphate + L-glutamate + 2 ADP + phosphate + 2 H(+). The enzyme catalyses hydrogencarbonate + NH4(+) + 2 ATP = carbamoyl phosphate + 2 ADP + phosphate + 2 H(+). Its pathway is amino-acid biosynthesis; L-arginine biosynthesis; carbamoyl phosphate from bicarbonate: step 1/1. It participates in pyrimidine metabolism; UMP biosynthesis via de novo pathway; (S)-dihydroorotate from bicarbonate: step 1/3. Large subunit of the glutamine-dependent carbamoyl phosphate synthetase (CPSase). CPSase catalyzes the formation of carbamoyl phosphate from the ammonia moiety of glutamine, carbonate, and phosphate donated by ATP, constituting the first step of 2 biosynthetic pathways, one leading to arginine and/or urea and the other to pyrimidine nucleotides. The large subunit (synthetase) binds the substrates ammonia (free or transferred from glutamine from the small subunit), hydrogencarbonate and ATP and carries out an ATP-coupled ligase reaction, activating hydrogencarbonate by forming carboxy phosphate which reacts with ammonia to form carbamoyl phosphate. This is Carbamoyl phosphate synthase large chain from Streptococcus gordonii (strain Challis / ATCC 35105 / BCRC 15272 / CH1 / DL1 / V288).